The primary structure comprises 86 residues: Small ribosomal subunit protein bS20 (86 aa).

The segment covering 1-27 (MANIKSAKKRAVQSEKRRQHNASRRSM) has biased composition (basic residues). The interval 1 to 28 (MANIKSAKKRAVQSEKRRQHNASRRSMM) is disordered.

It belongs to the bacterial ribosomal protein bS20 family.

Binds directly to 16S ribosomal RNA. The protein is Small ribosomal subunit protein bS20 of Proteus mirabilis (strain HI4320).